The primary structure comprises 389 residues: Phosphatidylglycerol--prolipoprotein diacylglyceryl transferase (389 aa).

4 consecutive transmembrane segments (helical) span residues isoleucine 28–phenylalanine 48, phenylalanine 58–isoleucine 78, leucine 98–phenylalanine 118, and isoleucine 148–glycine 168. Residue arginine 169 participates in a 1,2-diacyl-sn-glycero-3-phospho-(1'-sn-glycerol) binding. A run of 3 helical transmembrane segments spans residues isoleucine 220–valine 240, isoleucine 281–leucine 301, and phenylalanine 309–phenylalanine 329.

This sequence belongs to the Lgt family.

It localises to the cell membrane. It catalyses the reaction L-cysteinyl-[prolipoprotein] + a 1,2-diacyl-sn-glycero-3-phospho-(1'-sn-glycerol) = an S-1,2-diacyl-sn-glyceryl-L-cysteinyl-[prolipoprotein] + sn-glycerol 1-phosphate + H(+). The protein operates within protein modification; lipoprotein biosynthesis (diacylglyceryl transfer). Catalyzes the transfer of the diacylglyceryl group from phosphatidylglycerol to the sulfhydryl group of the N-terminal cysteine of a prolipoprotein, the first step in the formation of mature lipoproteins. This chain is Phosphatidylglycerol--prolipoprotein diacylglyceryl transferase, found in Mycoplasma pneumoniae (strain ATCC 29342 / M129 / Subtype 1) (Mycoplasmoides pneumoniae).